Here is a 533-residue protein sequence, read N- to C-terminus: Decreased expression in renal and prostate cancer protein (533 aa).

Basic and acidic residues predominate over residues 1–12 (MKEPRIFPRERP). Disordered stretches follow at residues 1-31 (MKEPRIFPRERPTPWTRAPLPPRGRLDGGPV), 67-164 (QNPS…PDPR), 177-259 (MRAG…RAGG), and 299-350 (ASGN…PNSA). Ser160 carries the phosphoserine modification. A compositionally biased stretch (polar residues) spans 299-309 (ASGNMGTNPPT). Position 368 is an asymmetric dimethylarginine (Arg368). Residue Arg396 is modified to Omega-N-methylarginine. At Ser432 the chain carries Phosphoserine.

The protein belongs to the DERPC family.

It is found in the nucleus. Its function is as follows. Potential tumor suppressor. The protein is Decreased expression in renal and prostate cancer protein of Mus musculus (Mouse).